A 364-amino-acid chain; its full sequence is tRNA 2-selenouridine synthase (364 aa).

The Rhodanese domain occupies leucine 14–tryptophan 137. Residue cysteine 97 is the S-selanylcysteine intermediate of the active site.

This sequence belongs to the SelU family. Monomer.

The catalysed reaction is 5-methylaminomethyl-2-thiouridine(34) in tRNA + selenophosphate + (2E)-geranyl diphosphate + H2O + H(+) = 5-methylaminomethyl-2-selenouridine(34) in tRNA + (2E)-thiogeraniol + phosphate + diphosphate. It carries out the reaction 5-methylaminomethyl-2-thiouridine(34) in tRNA + (2E)-geranyl diphosphate = 5-methylaminomethyl-S-(2E)-geranyl-thiouridine(34) in tRNA + diphosphate. It catalyses the reaction 5-methylaminomethyl-S-(2E)-geranyl-thiouridine(34) in tRNA + selenophosphate + H(+) = 5-methylaminomethyl-2-(Se-phospho)selenouridine(34) in tRNA + (2E)-thiogeraniol. The enzyme catalyses 5-methylaminomethyl-2-(Se-phospho)selenouridine(34) in tRNA + H2O = 5-methylaminomethyl-2-selenouridine(34) in tRNA + phosphate. Involved in the post-transcriptional modification of the uridine at the wobble position (U34) of tRNA(Lys), tRNA(Glu) and tRNA(Gln). Catalyzes the conversion of 2-thiouridine (S2U-RNA) to 2-selenouridine (Se2U-RNA). Acts in a two-step process involving geranylation of 2-thiouridine (S2U) to S-geranyl-2-thiouridine (geS2U) and subsequent selenation of the latter derivative to 2-selenouridine (Se2U) in the tRNA chain. This is tRNA 2-selenouridine synthase from Salmonella gallinarum (strain 287/91 / NCTC 13346).